Reading from the N-terminus, the 635-residue chain is 1-deoxy-D-xylulose-5-phosphate synthase (635 aa).

Residues H72 and G113–A115 contribute to the thiamine diphosphate site. Position 144 (D144) interacts with Mg(2+). Thiamine diphosphate contacts are provided by residues G145–A146, N174, Y286, and E369. Mg(2+) is bound at residue N174.

It belongs to the transketolase family. DXPS subfamily. As to quaternary structure, homodimer. Mg(2+) serves as cofactor. Thiamine diphosphate is required as a cofactor.

It catalyses the reaction D-glyceraldehyde 3-phosphate + pyruvate + H(+) = 1-deoxy-D-xylulose 5-phosphate + CO2. Its pathway is metabolic intermediate biosynthesis; 1-deoxy-D-xylulose 5-phosphate biosynthesis; 1-deoxy-D-xylulose 5-phosphate from D-glyceraldehyde 3-phosphate and pyruvate: step 1/1. Its function is as follows. Catalyzes the acyloin condensation reaction between C atoms 2 and 3 of pyruvate and glyceraldehyde 3-phosphate to yield 1-deoxy-D-xylulose-5-phosphate (DXP). This chain is 1-deoxy-D-xylulose-5-phosphate synthase, found in Acaryochloris marina (strain MBIC 11017).